A 22-amino-acid chain; its full sequence is MICOS complex subunit MIC60 (22 aa).

Belongs to the MICOS complex subunit Mic60 family. In terms of assembly, component of the mitochondrial contact site and cristae organizing system (MICOS) complex, composed of at least MICOS10/MIC10, CHCHD3/MIC19, CHCHD6/MIC25, APOOL/MIC27, IMMT/MIC60, APOO/MIC23/MIC26 and MICOS13/MIC13. This complex was also known under the names MINOS or MitOS complex. The MICOS complex associates with mitochondrial outer membrane proteins SAMM50, MTX1 and MTX2 (together described as components of the mitochondrial outer membrane sorting assembly machinery (SAM) complex) and DNAJC11, mitochondrial inner membrane protein TMEM11 and with HSPA9. The MICOS and SAM complexes together with DNAJC11 are part of a large protein complex spanning both membranes termed the mitochondrial intermembrane space bridging (MIB) complex. Interacts with HSPA1A/HSPA1B and OPA1, preferentially with the soluble OPA1 form. Interacts with MICOS13/MIC13, MICOS10/MIC10, CHCHD3/MIC19, CHCHD6/MIC25, SAMM50 and TMEM11. Interacts with APOO/MIC23/MIC26 and APOOL/MIC27. Interacts with ARMC1. Interacts with ARMC12.

It localises to the mitochondrion inner membrane. It is found in the mitochondrion. Its function is as follows. Component of the MICOS complex, a large protein complex of the mitochondrial inner membrane that plays crucial roles in the maintenance of crista junctions, inner membrane architecture, and formation of contact sites to the outer membrane. Plays an important role in the maintenance of the MICOS complex stability and the mitochondrial cristae morphology. The sequence is that of MICOS complex subunit MIC60 from Mesocricetus auratus (Golden hamster).